The sequence spans 347 residues: NADH-quinone oxidoreductase subunit H (347 aa).

Transmembrane regions (helical) follow at residues 13–33 (LLILLKSVALIVILLVGVAYI), 50–70 (PNVVGPWGLFQAFADLFKFVF), 82–102 (GVFLLAPVVAAGLALAAWAVI), 115–135 (VGILYVFAIASLEVYGVIMAG), 161–181 (IGFVIVTVLLAVGSLNLTDIV), 198–218 (FLDWHWLALFPMFIIFFISAL), 248–268 (FLLFFLGEYVAIVLMCALTTI), 286–306 (VPGVVWFVLKLVAVFFMFALV), and 321–341 (LGWKVFLPISLFMVVATAAFL).

Belongs to the complex I subunit 1 family. In terms of assembly, NDH-1 is composed of 14 different subunits. Subunits NuoA, H, J, K, L, M, N constitute the membrane sector of the complex.

It is found in the cell inner membrane. It catalyses the reaction a quinone + NADH + 5 H(+)(in) = a quinol + NAD(+) + 4 H(+)(out). NDH-1 shuttles electrons from NADH, via FMN and iron-sulfur (Fe-S) centers, to quinones in the respiratory chain. The immediate electron acceptor for the enzyme in this species is believed to be ubiquinone. Couples the redox reaction to proton translocation (for every two electrons transferred, four hydrogen ions are translocated across the cytoplasmic membrane), and thus conserves the redox energy in a proton gradient. This subunit may bind ubiquinone. This is NADH-quinone oxidoreductase subunit H from Chelativorans sp. (strain BNC1).